The primary structure comprises 182 residues: Bifunctional protein PyrR (182 aa).

Positions 98–110 (VVLVDDVLFTGRS) match the PRPP-binding motif.

It belongs to the purine/pyrimidine phosphoribosyltransferase family. PyrR subfamily.

The enzyme catalyses UMP + diphosphate = 5-phospho-alpha-D-ribose 1-diphosphate + uracil. Its function is as follows. Regulates the transcription of the pyrimidine nucleotide (pyr) operon in response to exogenous pyrimidines. In terms of biological role, also displays a weak uracil phosphoribosyltransferase activity which is not physiologically significant. This Dehalococcoides mccartyi (strain ATCC BAA-2100 / JCM 16839 / KCTC 5957 / BAV1) protein is Bifunctional protein PyrR.